Consider the following 323-residue polypeptide: UDP-N-acetylenolpyruvoylglucosamine reductase (323 aa).

An FAD-binding PCMH-type domain is found at 33–214; sequence IGGPAEALFC…LSAVFTLTHG (182 aa). The active-site Proton donor is Ser243. Residue Glu315 is part of the active site.

The protein belongs to the MurB family. The cofactor is FAD.

It localises to the cytoplasm. The enzyme catalyses UDP-N-acetyl-alpha-D-muramate + NADP(+) = UDP-N-acetyl-3-O-(1-carboxyvinyl)-alpha-D-glucosamine + NADPH + H(+). It participates in cell wall biogenesis; peptidoglycan biosynthesis. In terms of biological role, cell wall formation. The chain is UDP-N-acetylenolpyruvoylglucosamine reductase from Treponema denticola (strain ATCC 35405 / DSM 14222 / CIP 103919 / JCM 8153 / KCTC 15104).